The chain runs to 136 residues: Selenoprotein M (136 aa).

Residues 1–19 (MWLPLPLLLGLLQLQPILS) form the signal peptide. Active-site nucleophile residues include C38 and U41. The cysteinyl-selenocysteine (Cys-Sec) cross-link spans 38 to 41 (CGGU). Position 41 (U41) is a non-standard amino acid, selenocysteine. The segment at 111-136 (SSPDAPVPAEFKMAPARASGDTKEDL) is disordered. Residues 133–136 (KEDL) carry the Prevents secretion from ER motif.

The protein belongs to the selenoprotein M/F family.

The protein localises to the endoplasmic reticulum. Functionally, may function as a thiol-disulfide oxidoreductase that participates in disulfide bond formation. This Xenopus laevis (African clawed frog) protein is Selenoprotein M (selenom).